The chain runs to 492 residues: ATP synthase subunit beta, chloroplastic (492 aa).

Residue 170-177 (GGAGVGKT) participates in ATP binding.

The protein belongs to the ATPase alpha/beta chains family. As to quaternary structure, F-type ATPases have 2 components, CF(1) - the catalytic core - and CF(0) - the membrane proton channel. CF(1) has five subunits: alpha(3), beta(3), gamma(1), delta(1), epsilon(1). CF(0) has four main subunits: a(1), b(1), b'(1) and c(9-12).

The protein resides in the plastid. Its subcellular location is the chloroplast thylakoid membrane. It catalyses the reaction ATP + H2O + 4 H(+)(in) = ADP + phosphate + 5 H(+)(out). Functionally, produces ATP from ADP in the presence of a proton gradient across the membrane. The catalytic sites are hosted primarily by the beta subunits. In Pinus thunbergii (Japanese black pine), this protein is ATP synthase subunit beta, chloroplastic.